A 523-amino-acid polypeptide reads, in one-letter code: Cyclin-dependent kinase 17 (523 aa).

S9 bears the Phosphoserine mark. The tract at residues 30–55 is disordered; sequence TIEENSSKDNEPIVKNGRPPTSHSMH. Phosphoserine is present on residues S80, S92, and S105. Residues 103–123 form a disordered region; the sequence is MGSDGESDQASGTSSDEVQSP. A compositionally biased stretch (polar residues) spans 110-123; the sequence is DQASGTSSDEVQSP. Phosphoserine is present on residues S137, S146, S165, and S180. The region spanning 192–473 is the Protein kinase domain; that stretch reads YIKLEKLGEG…AEEAMKHVYF (282 aa). Residues 198–206 and K221 contribute to the ATP site; that span reads LGEGTYATV. The active-site Proton acceptor is the D313. Residues 501-523 are disordered; the sequence is PGFRNSSYPETGHGKNRRQSMLF. The span at 514-523 shows a compositional bias: basic residues; the sequence is GKNRRQSMLF.

This sequence belongs to the protein kinase superfamily. CMGC Ser/Thr protein kinase family. CDC2/CDKX subfamily. Found in a complex containing CABLES1, CDK16 and TDRD7. Interacts with TDRD7.

It catalyses the reaction L-seryl-[protein] + ATP = O-phospho-L-seryl-[protein] + ADP + H(+). The catalysed reaction is L-threonyl-[protein] + ATP = O-phospho-L-threonyl-[protein] + ADP + H(+). May play a role in terminally differentiated neurons. Has a Ser/Thr-phosphorylating activity for histone H1. This Homo sapiens (Human) protein is Cyclin-dependent kinase 17 (CDK17).